A 161-amino-acid polypeptide reads, in one-letter code: ATP synthase subunit b' (161 aa).

Residues 30–47 (VMAIQFLVLAALLNKLFY) traverse the membrane as a helical segment.

Belongs to the ATPase B chain family. In terms of assembly, F-type ATPases have 2 components, F(1) - the catalytic core - and F(0) - the membrane proton channel. F(1) has five subunits: alpha(3), beta(3), gamma(1), delta(1), epsilon(1). F(0) has four main subunits: a(1), b(1), b'(1) and c(10-14). The alpha and beta chains form an alternating ring which encloses part of the gamma chain. F(1) is attached to F(0) by a central stalk formed by the gamma and epsilon chains, while a peripheral stalk is formed by the delta, b and b' chains.

The protein localises to the cellular thylakoid membrane. Its function is as follows. F(1)F(0) ATP synthase produces ATP from ADP in the presence of a proton or sodium gradient. F-type ATPases consist of two structural domains, F(1) containing the extramembraneous catalytic core and F(0) containing the membrane proton channel, linked together by a central stalk and a peripheral stalk. During catalysis, ATP synthesis in the catalytic domain of F(1) is coupled via a rotary mechanism of the central stalk subunits to proton translocation. In terms of biological role, component of the F(0) channel, it forms part of the peripheral stalk, linking F(1) to F(0). The b'-subunit is a diverged and duplicated form of b found in plants and photosynthetic bacteria. The polypeptide is ATP synthase subunit b' (Picosynechococcus sp. (strain ATCC 27264 / PCC 7002 / PR-6) (Agmenellum quadruplicatum)).